Here is a 366-residue protein sequence, read N- to C-terminus: Histidinol-phosphate aminotransferase (366 aa).

Lysine 228 carries the post-translational modification N6-(pyridoxal phosphate)lysine.

It belongs to the class-II pyridoxal-phosphate-dependent aminotransferase family. Histidinol-phosphate aminotransferase subfamily. As to quaternary structure, homodimer. It depends on pyridoxal 5'-phosphate as a cofactor.

The catalysed reaction is L-histidinol phosphate + 2-oxoglutarate = 3-(imidazol-4-yl)-2-oxopropyl phosphate + L-glutamate. It functions in the pathway amino-acid biosynthesis; L-histidine biosynthesis; L-histidine from 5-phospho-alpha-D-ribose 1-diphosphate: step 7/9. This is Histidinol-phosphate aminotransferase from Corynebacterium glutamicum (strain ATCC 13032 / DSM 20300 / JCM 1318 / BCRC 11384 / CCUG 27702 / LMG 3730 / NBRC 12168 / NCIMB 10025 / NRRL B-2784 / 534).